The primary structure comprises 131 residues: UPF0102 protein YraN (131 aa).

Residues 1 to 19 (MATVPTRSGSPRQLTTKQT) show a composition bias toward polar residues. The interval 1-21 (MATVPTRSGSPRQLTTKQTGD) is disordered.

This sequence belongs to the UPF0102 family.

The chain is UPF0102 protein YraN from Escherichia coli O45:K1 (strain S88 / ExPEC).